A 365-amino-acid polypeptide reads, in one-letter code: Peridinin-chlorophyll a-binding protein, chloroplastic (365 aa).

Residues 1-52 constitute a chloroplast transit peptide; that stretch reads MVRGARKAIAVGVAVAVACGLQKHLNFVPGPRHAAPVAAAAASMMMAPAAFA. Repeat copies occupy residues 53–215 and 216–365.

Monomer.

It is found in the plastid. Its subcellular location is the chloroplast. Water-soluble antenna for capture of solar energy in the blue-green range. Peridinin is an asymmetric carotenoid. This chain is Peridinin-chlorophyll a-binding protein, chloroplastic, found in Symbiodinium sp. (Dinoflagellate).